The following is a 263-amino-acid chain: Flagellar brake protein YcgR (263 aa).

Residues 1–21 (MAELSTPSPASPAPLDGGRGD) form a disordered region. The 118-residue stretch at 133 to 250 (QRREFYRLQV…DTRIQRYIFK (118 aa)) folds into the PilZ domain.

It belongs to the YcgR family. In terms of assembly, monomer. Interacts with the flagellar basal bodies.

Its subcellular location is the bacterial flagellum basal body. Functionally, acts as a flagellar brake, regulating swimming and swarming in a bis-(3'-5') cyclic diguanylic acid (c-di-GMP)-dependent manner. Binds 1 c-di-GMP dimer per subunit. Increasing levels of c-di-GMP lead to decreased motility. The polypeptide is Flagellar brake protein YcgR (Thauera aminoaromatica).